Here is a 321-residue protein sequence, read N- to C-terminus: Pectinesterase (321 aa).

Position 1 is an N-acetylthreonine (threonine 1). A glycan (N-linked (GlcNAc...) (complex) asparagine) is linked at asparagine 75. Substrate is bound by residues threonine 84 and glutamine 114. The active-site Proton donor is aspartate 137. An intrachain disulfide couples cysteine 151 to cysteine 171. Catalysis depends on aspartate 158, which acts as the Nucleophile. Arginine 226 and tryptophan 228 together coordinate substrate. Asparagine 275, asparagine 290, and asparagine 319 each carry an N-linked (GlcNAc...) (complex) asparagine glycan.

It belongs to the pectinesterase family. The N-glycans attached at Asn-75, Asn-275, Asn-290 and Asn-319 are complex oligosaccharides containing xylose, fucose, hexose and N-acetylglucosamine.

It carries out the reaction [(1-&gt;4)-alpha-D-galacturonosyl methyl ester](n) + n H2O = [(1-&gt;4)-alpha-D-galacturonosyl](n) + n methanol + n H(+). Its pathway is glycan metabolism; pectin degradation; 2-dehydro-3-deoxy-D-gluconate from pectin: step 1/5. Inhibited by PMEI. The sequence is that of Pectinesterase from Actinidia deliciosa (Kiwi).